Here is a 169-residue protein sequence, read N- to C-terminus: Lipoprotein signal peptidase (169 aa).

4 consecutive transmembrane segments (helical) span residues 4-24 (PICSTGLRWLWLAVLVVIVDL), 42-62 (LIPFFNLTYAQNFGAAFSFLA), 70-90 (WFFAGIAIGISVLLMVLMYRS), and 102-122 (ALIIGGALGNLFDRMVHGAVI). Catalysis depends on residues Asp123 and Asp141. The helical transmembrane segment at 137 to 157 (FNIADTAICIGAALVIFEGFI) threads the bilayer.

The protein belongs to the peptidase A8 family.

It localises to the cell inner membrane. The catalysed reaction is Release of signal peptides from bacterial membrane prolipoproteins. Hydrolyzes -Xaa-Yaa-Zaa-|-(S,diacylglyceryl)Cys-, in which Xaa is hydrophobic (preferably Leu), and Yaa (Ala or Ser) and Zaa (Gly or Ala) have small, neutral side chains.. It participates in protein modification; lipoprotein biosynthesis (signal peptide cleavage). Its function is as follows. This protein specifically catalyzes the removal of signal peptides from prolipoproteins. In Yersinia enterocolitica serotype O:8 / biotype 1B (strain NCTC 13174 / 8081), this protein is Lipoprotein signal peptidase.